Reading from the N-terminus, the 172-residue chain is Adenine phosphoribosyltransferase (172 aa).

Belongs to the purine/pyrimidine phosphoribosyltransferase family. As to quaternary structure, homodimer.

It localises to the cytoplasm. It carries out the reaction AMP + diphosphate = 5-phospho-alpha-D-ribose 1-diphosphate + adenine. It functions in the pathway purine metabolism; AMP biosynthesis via salvage pathway; AMP from adenine: step 1/1. In terms of biological role, catalyzes a salvage reaction resulting in the formation of AMP, that is energically less costly than de novo synthesis. The chain is Adenine phosphoribosyltransferase from Lactiplantibacillus plantarum (strain ATCC BAA-793 / NCIMB 8826 / WCFS1) (Lactobacillus plantarum).